The primary structure comprises 293 residues: DNA-directed RNA polymerase III subunit RPC6 (293 aa).

The protein belongs to the eukaryotic RPC34/RPC39 RNA polymerase subunit family. Component of the RNA polymerase III (Pol III) complex consisting of 17 subunits.

It is found in the nucleus. DNA-dependent RNA polymerase catalyzes the transcription of DNA into RNA using the four ribonucleoside triphosphates as substrates. Specific peripheric component of RNA polymerase III which synthesizes small RNAs, such as 5S rRNA and tRNAs. The polypeptide is DNA-directed RNA polymerase III subunit RPC6 (Drosophila melanogaster (Fruit fly)).